The chain runs to 270 residues: Probable septum site-determining protein MinC (270 aa).

Positions 105 to 129 (DRRAPSSKAADEAPVQQAEPAAPAA) are disordered. Low complexity predominate over residues 116–129 (EAPVQQAEPAAPAA).

The protein belongs to the MinC family. Interacts with MinD and FtsZ.

Functionally, cell division inhibitor that blocks the formation of polar Z ring septums. Rapidly oscillates between the poles of the cell to destabilize FtsZ filaments that have formed before they mature into polar Z rings. Prevents FtsZ polymerization. The chain is Probable septum site-determining protein MinC from Burkholderia pseudomallei (strain 668).